An 833-amino-acid chain; its full sequence is Leucine--tRNA ligase (833 aa).

The short motif at 41–52 is the 'HIGH' region element; it reads PYPSGAGLHVGH. The 'KMSKS' region motif lies at 610–614; sequence KMSKS. K613 is an ATP binding site.

This sequence belongs to the class-I aminoacyl-tRNA synthetase family.

It is found in the cytoplasm. The catalysed reaction is tRNA(Leu) + L-leucine + ATP = L-leucyl-tRNA(Leu) + AMP + diphosphate. The protein is Leucine--tRNA ligase of Streptococcus pyogenes serotype M4 (strain MGAS10750).